The primary structure comprises 756 residues: Hyperosmolality-gated Ca2+ permeable channel 1.5 (756 aa).

The next 10 helical transmembrane spans lie at 7 to 27, 101 to 121, 154 to 174, 373 to 393, 425 to 445, 465 to 485, 510 to 530, 574 to 594, 628 to 648, and 651 to 671; these read IGVAATINILTAFAFFIAFAI, IYLLGLKIFFPIACIAFTVMV, SRFWVHLCMAYVITFWTCFVL, LVIAVAFFFLTFFFMIPIAFV, FLPGIALKIFLIVLPSILMLM, YYMFQFINVFLCSIIAGTALQ, ATFFITYIMVDGWAGVAGEIL, FILGLVYAAVSPILLPFILVF, VVIALIVSQLLLMGLLSTKKA, and STPLLFILPVLTIGFHKFCQG. Positions 731 to 756 are disordered; it reads PDKTPDLVATKRGSRRFNSGSAETFT. A compositionally biased stretch (polar residues) spans 746-756; it reads RFNSGSAETFT.

It belongs to the CSC1 (TC 1.A.17) family.

Its subcellular location is the membrane. Functionally, acts as an osmosensitive calcium-permeable cation channel. The polypeptide is Hyperosmolality-gated Ca2+ permeable channel 1.5 (Arabidopsis thaliana (Mouse-ear cress)).